The chain runs to 199 residues: ATP-dependent Clp protease proteolytic subunit (199 aa).

The active-site Nucleophile is S102. The active site involves H127.

Belongs to the peptidase S14 family. As to quaternary structure, fourteen ClpP subunits assemble into 2 heptameric rings which stack back to back to give a disk-like structure with a central cavity, resembling the structure of eukaryotic proteasomes.

The protein resides in the cytoplasm. The catalysed reaction is Hydrolysis of proteins to small peptides in the presence of ATP and magnesium. alpha-casein is the usual test substrate. In the absence of ATP, only oligopeptides shorter than five residues are hydrolyzed (such as succinyl-Leu-Tyr-|-NHMec, and Leu-Tyr-Leu-|-Tyr-Trp, in which cleavage of the -Tyr-|-Leu- and -Tyr-|-Trp bonds also occurs).. Functionally, cleaves peptides in various proteins in a process that requires ATP hydrolysis. Has a chymotrypsin-like activity. Plays a major role in the degradation of misfolded proteins. The polypeptide is ATP-dependent Clp protease proteolytic subunit (Pseudothermotoga lettingae (strain ATCC BAA-301 / DSM 14385 / NBRC 107922 / TMO) (Thermotoga lettingae)).